A 688-amino-acid polypeptide reads, in one-letter code: Polyribonucleotide nucleotidyltransferase (688 aa).

The Mg(2+) site is built by Asp-484 and Asp-490. The region spanning 550–609 is the KH domain; the sequence is PTTEIFNVAPDKIVEIIGQGGRVIKEIVEKFEVKIDLNKPSGEVKIMGNKERVLKTKEFI. Residues 626 to 688 enclose the S1 motif domain; sequence DEVLEAQVKR…NKGKIALDLA (63 aa).

It belongs to the polyribonucleotide nucleotidyltransferase family. Mg(2+) serves as cofactor.

The protein localises to the cytoplasm. The catalysed reaction is RNA(n+1) + phosphate = RNA(n) + a ribonucleoside 5'-diphosphate. Involved in mRNA degradation. Catalyzes the phosphorolysis of single-stranded polyribonucleotides processively in the 3'- to 5'-direction. This is Polyribonucleotide nucleotidyltransferase from Helicobacter pylori (strain ATCC 700392 / 26695) (Campylobacter pylori).